The sequence spans 583 residues: Interactor of constitutive active ROPs 2, chloroplastic (583 aa).

The transit peptide at 1-55 (MQTPKPRPGSLEVPQKKSPASTPKTARKLKTSESDPVSSPNTKIRTPKTQSPKVV) directs the protein to the chloroplast. Disordered regions lie at residues 1–80 (MQTP…PELA) and 101–125 (EALK…NASE). Residues 34-52 (SDPVSSPNTKIRTPKTQSP) are compositionally biased toward polar residues. Coiled-coil stretches lie at residues 74–207 (GKTP…DAKE) and 238–516 (MKMS…AAAT). Basic and acidic residues predominate over residues 102–115 (ALKKEAQDQAEETK). Positions 518-583 (LSGGNNNNNS…IGVLLKKSQK (66 aa)) are disordered. Positions 519–529 (SGGNNNNNSNG) are enriched in low complexity. Position 540 is a phosphoserine (Ser540).

This sequence belongs to the ICR family. In terms of assembly, interacts with ARAC8, ARAC11 and KIN13A in vitro, but not with ICR1 or SEC3A.

It localises to the plastid. The protein resides in the chloroplast. In terms of biological role, acts as a scaffold, mediating interaction of ROPs with different proteins. The chain is Interactor of constitutive active ROPs 2, chloroplastic (ICR2) from Arabidopsis thaliana (Mouse-ear cress).